A 686-amino-acid chain; its full sequence is MTFSPQRPEFETGKQPDPETEHAGDFFEETSSSAPRAASNGSSGPNYTLITTFLAALTAGIFAFWAGWTRKWISDDGLIVLRTVRNLLAGNGPVFNAGERVEANTSTLWQYCIYLVALVTDYRLEDIALWLALLFTTAASIIGVLGTAHLHRKRIAVLLPAGVIGYFSLSPARDFATSGLEWGLSLMWISIQWLLLVLWATSGKTSGKKASGAKTSNPIVNAGAITYALAFWSGLSWLVRPELAMYGGLTGVLLLLTAPRWRVVLGILVAALPLPAAYQIFRMGYYGLMVPHTAVAKSASDAVWGTGWEYVEDFTGPYNLWLGLALLLAAGALTVWKTDKHLAIPKGRLGLRTPGMAIALLVICALVHFLYVIRVGGDFMHGRMLLLPLFAILLPVSVIPVNVVDRGWQDLVALVLVFSTWVWSTVVFVQGHQWENTGQHVVDERDFWIDFTNRDEDHPPLYAEDFLTVDSMNDYAEVMRDQTLVNPTGQQLNILASSDPTTYSWITTPRVEGVEAGDLANLSPTVFHVNLGMTSMNAPLNVRVTDLIGLATPLAARQPRIEGGRIGHDKLMDLEWQVAESATPLAYTPGWLDTQKTYEARQALRHPELVHLFQTYREPMSYHRFVDNIKYALTTGRTLEISDNPEDLLKEFNPTPAEIQDGLETIAWPGEIKLDEPRGEPLYSSQ.

Positions 1 to 42 (MTFSPQRPEFETGKQPDPETEHAGDFFEETSSSAPRAASNGS) are disordered. Positions 8–25 (PEFETGKQPDPETEHAGD) are enriched in basic and acidic residues. The segment covering 29–42 (ETSSSAPRAASNGS) has biased composition (polar residues). The next 10 membrane-spanning stretches (helical) occupy residues 48 to 68 (TLITTFLAALTAGIFAFWAGW), 127 to 147 (IALWLALLFTTAASIIGVLGT), 155 to 175 (IAVLLPAGVIGYFSLSPARDF), 180 to 200 (LEWGLSLMWISIQWLLLVLWA), 219 to 239 (IVNAGAITYALAFWSGLSWLV), 261 to 281 (WRVVLGILVAALPLPAAYQIF), 316 to 336 (GPYNLWLGLALLLAAGALTVW), 353 to 373 (TPGMAIALLVICALVHFLYVI), 384 to 404 (MLLLPLFAILLPVSVIPVNVV), and 411 to 431 (LVALVLVFSTWVWSTVVFVQG).

Belongs to the AftB family.

The protein resides in the membrane. Its pathway is cell wall biogenesis; cell wall polysaccharide biosynthesis. In terms of biological role, involved in the biosynthesis of the arabinogalactan (AG) region of the mycolylarabinogalactan-peptidoglycan (mAGP) complex, an essential component of the cell wall. Catalyzes the transfer of arabinofuranosyl (Araf) residues from the sugar donor decaprenyl-phospho-arabinose (DPA) to the arabinan domain to form terminal beta-(1-&gt;2)-linked Araf residues, which marks the end point for AG arabinan biosynthesis before decoration with mycolic acids. The protein is Terminal beta-(1-&gt;2)-arabinofuranosyltransferase (aftB) of Corynebacterium glutamicum (strain ATCC 13032 / DSM 20300 / JCM 1318 / BCRC 11384 / CCUG 27702 / LMG 3730 / NBRC 12168 / NCIMB 10025 / NRRL B-2784 / 534).